Reading from the N-terminus, the 143-residue chain is Nucleoside diphosphate kinase 2 (143 aa).

ATP is bound by residues Lys-11, Phe-59, Arg-87, Thr-93, Arg-104, and Asn-114. His-117 acts as the Pros-phosphohistidine intermediate in catalysis.

It belongs to the NDK family. As to quaternary structure, homotetramer. Mg(2+) is required as a cofactor.

Its subcellular location is the cytoplasm. The catalysed reaction is a 2'-deoxyribonucleoside 5'-diphosphate + ATP = a 2'-deoxyribonucleoside 5'-triphosphate + ADP. It carries out the reaction a ribonucleoside 5'-diphosphate + ATP = a ribonucleoside 5'-triphosphate + ADP. In terms of biological role, major role in the synthesis of nucleoside triphosphates other than ATP. The ATP gamma phosphate is transferred to the NDP beta phosphate via a ping-pong mechanism, using a phosphorylated active-site intermediate. The sequence is that of Nucleoside diphosphate kinase 2 from Protochlamydia amoebophila (strain UWE25).